The following is a 245-amino-acid chain: Aliphatic sulfonates import ATP-binding protein SsuB (245 aa).

The ABC transporter domain maps to 6–225; it reads VTVRGLRRAF…SRGDEGFDDL (220 aa). 38–45 is an ATP binding site; that stretch reads GLSGSGKS.

This sequence belongs to the ABC transporter superfamily. Aliphatic sulfonates importer (TC 3.A.1.17.2) family. The complex is composed of two ATP-binding proteins (SsuB), two transmembrane proteins (SsuC) and a solute-binding protein (SsuA).

The protein resides in the cell membrane. The enzyme catalyses ATP + H2O + aliphatic sulfonate-[sulfonate-binding protein]Side 1 = ADP + phosphate + aliphatic sulfonateSide 2 + [sulfonate-binding protein]Side 1.. Its function is as follows. Part of the ABC transporter complex SsuABC involved in aliphatic sulfonates import. Responsible for energy coupling to the transport system. This is Aliphatic sulfonates import ATP-binding protein SsuB from Mycobacterium sp. (strain MCS).